Reading from the N-terminus, the 482-residue chain is Replication factor C large subunit (482 aa).

46 to 53 (GPPGSGKT) contacts ATP. The interval 420-482 (EKETPKKKKK…KKQATLDSFF (63 aa)) is disordered. The span at 442–476 (KISEPPKEPLKEVIEETVEKTDKKEKEKKDPKKQA) shows a compositional bias: basic and acidic residues.

This sequence belongs to the activator 1 small subunits family. RfcL subfamily. In terms of assembly, heteromultimer composed of small subunits (RfcS) and large subunits (RfcL).

In terms of biological role, part of the RFC clamp loader complex which loads the PCNA sliding clamp onto DNA. The chain is Replication factor C large subunit from Methanococcus maripaludis (strain C7 / ATCC BAA-1331).